Reading from the N-terminus, the 428-residue chain is MRYTKSEEAMKVAETLMPGGVNSPVRAFKSVDTPAIFMDHGKGSKIYDIDGNEYIDYVLSWGPLILGHRDPQVISHLHEAIDKGTSFGASTLLENKLAQLVIDRVPSIEKVRMVSSGTEATLDTLRLARGYTGRNKIVKFEGCYHGHSDSLLIKAGSGVATLGLPDSPGVPEGIAKNTITVPYNDLDALKIAFEKFGNDIAGVIVEPVAGNMGVVPPIEGFLQGLRDITTEYGALLIFDEVMTGFRVGYHCAQGYFGVTPDLTCLGKVIGGGLPVGAFGGKKEIMDHIAPLGNIYQAGTLSGNPLAMTSGYETLSQLTPETYEYFNMLGDILEDGLKRVFAKHNVPITVNRAGSMIGYFLNEGPVTNFEQANKSDLKLFAEMYREMAKEGVFLPPSQFEGTFLSTAHTKEDIEKTIQAFDTALSRIVK.

At K267 the chain carries N6-(pyridoxal phosphate)lysine.

This sequence belongs to the class-III pyridoxal-phosphate-dependent aminotransferase family. HemL subfamily. Homodimer. Pyridoxal 5'-phosphate is required as a cofactor.

Its subcellular location is the cytoplasm. It carries out the reaction (S)-4-amino-5-oxopentanoate = 5-aminolevulinate. It participates in porphyrin-containing compound metabolism; protoporphyrin-IX biosynthesis; 5-aminolevulinate from L-glutamyl-tRNA(Glu): step 2/2. The polypeptide is Glutamate-1-semialdehyde 2,1-aminomutase 1 (hemL1) (Staphylococcus aureus (strain NCTC 8325 / PS 47)).